Here is a 255-residue protein sequence, read N- to C-terminus: Type III pantothenate kinase (255 aa).

6-13 lines the ATP pocket; the sequence is DVGNTNTV. Substrate contacts are provided by residues Tyr-100 and 107-110; that span reads GADR. The active-site Proton acceptor is the Asp-109. Asp-129 is a binding site for K(+). Thr-132 provides a ligand contact to ATP. A substrate-binding site is contributed by Thr-184.

This sequence belongs to the type III pantothenate kinase family. In terms of assembly, homodimer. It depends on NH4(+) as a cofactor. The cofactor is K(+).

It localises to the cytoplasm. It carries out the reaction (R)-pantothenate + ATP = (R)-4'-phosphopantothenate + ADP + H(+). It participates in cofactor biosynthesis; coenzyme A biosynthesis; CoA from (R)-pantothenate: step 1/5. Catalyzes the phosphorylation of pantothenate (Pan), the first step in CoA biosynthesis. The polypeptide is Type III pantothenate kinase (Acetivibrio thermocellus (strain ATCC 27405 / DSM 1237 / JCM 9322 / NBRC 103400 / NCIMB 10682 / NRRL B-4536 / VPI 7372) (Clostridium thermocellum)).